A 504-amino-acid polypeptide reads, in one-letter code: Maturase K (504 aa).

This sequence belongs to the intron maturase 2 family. MatK subfamily.

The protein resides in the plastid. Its subcellular location is the chloroplast. Its function is as follows. Usually encoded in the trnK tRNA gene intron. Probably assists in splicing its own and other chloroplast group II introns. The polypeptide is Maturase K (Guizotia abyssinica (Niger)).